A 252-amino-acid chain; its full sequence is tRNA (guanine-N(1)-)-methyltransferase (252 aa).

S-adenosyl-L-methionine is bound by residues Gly116 and 135–140 (LGDYVL).

It belongs to the RNA methyltransferase TrmD family. Homodimer.

The protein resides in the cytoplasm. It catalyses the reaction guanosine(37) in tRNA + S-adenosyl-L-methionine = N(1)-methylguanosine(37) in tRNA + S-adenosyl-L-homocysteine + H(+). Functionally, specifically methylates guanosine-37 in various tRNAs. The sequence is that of tRNA (guanine-N(1)-)-methyltransferase from Limosilactobacillus fermentum (strain NBRC 3956 / LMG 18251) (Lactobacillus fermentum).